A 199-amino-acid polypeptide reads, in one-letter code: Ribonuclease HII (199 aa).

Residues 12–199 (DLLAGTDEAG…FGPVKKILEG (188 aa)) enclose the RNase H type-2 domain. A divalent metal cation contacts are provided by Asp18, Glu19, and Asp110.

Belongs to the RNase HII family. Requires Mn(2+) as cofactor. Mg(2+) is required as a cofactor.

It localises to the cytoplasm. It catalyses the reaction Endonucleolytic cleavage to 5'-phosphomonoester.. Functionally, endonuclease that specifically degrades the RNA of RNA-DNA hybrids. The chain is Ribonuclease HII from Marinomonas sp. (strain MWYL1).